A 316-amino-acid chain; its full sequence is Zinc finger protein 330 (316 aa).

The tract at residues 1-24 is disordered; sequence MPKKKTGARKKAENRREREKQLRA. The Nuclear localization signal signature appears at 3–11; that stretch reads KKKTGARKK. The span at 10–22 shows a compositional bias: basic and acidic residues; that stretch reads KKAENRREREKQL. C4-type zinc fingers lie at residues 42–58, 67–104, 129–149, and 175–189; these read CDKC…CYFC, CAQC…CDFC, CVEC…CSFC, and CVSC…CLRC. The interval 227 to 299 is disordered; it reads SMSTRSLKFG…ESSDLFNNLN (73 aa). The span at 268 to 291 shows a compositional bias: acidic residues; that stretch reads DDDEEEDEAEDEEEEDGKDSDAES. Ser287 carries the post-translational modification Phosphoserine.

Belongs to the NOA36 family.

The protein localises to the nucleus. The protein resides in the nucleolus. It localises to the chromosome. Its subcellular location is the centromere. The protein is Zinc finger protein 330 (Znf330) of Mus musculus (Mouse).